The following is a 3312-amino-acid chain: Cadherin EGF LAG seven-pass G-type receptor 3 (3312 aa).

An N-terminal signal peptide occupies residues 1-32 (MMARRPPWRGLGGRSTPILLLLLLSLFPLSQE). Topologically, residues 33–2540 (ELGGGGHQGW…RLEGDLELLA (2508 aa)) are extracellular. Disordered stretches follow at residues 90 to 112 (GRRQ…LGIE), 143 to 199 (GRTG…RKRV), and 212 to 306 (GSKG…EARK). A compositionally biased stretch (low complexity) spans 159–173 (SSGVPGSGNSSPLPS). Over residues 290–299 (RPGPRPPGLP) the composition is skewed to pro residues. 9 consecutive Cadherin domains span residues 326 to 433 (PQYN…SPVF), 434 to 545 (EQAQ…APQF), 546 to 651 (SEKR…IPIF), 652 to 756 (VSTP…RPEF), 757 to 858 (TMKE…RPVF), 859 to 961 (QSAH…APQF), 962 to 1067 (VASH…APVF), 1068 to 1169 (PAEE…SPVL), and 1170 to 1265 (NNFQ…RVVI). Asn-632 is a glycosylation site (N-linked (GlcNAc...) asparagine). Residue Asn-847 is glycosylated (N-linked (GlcNAc...) asparagine). N-linked (GlcNAc...) asparagine glycosylation is found at Asn-1182, Asn-1222, Asn-1317, and Asn-1327. The region spanning 1375 to 1433 (DDNVCLREPCENYMKCVSVLRFDSSAPFLASASTLFRPIQPIAGLRCRCPPGFTGDFCE) is the EGF-like 1; calcium-binding domain. 9 disulfides stabilise this stretch: Cys-1379/Cys-1390, Cys-1384/Cys-1421, Cys-1423/Cys-1432, Cys-1439/Cys-1450, Cys-1444/Cys-1459, Cys-1461/Cys-1470, Cys-1479/Cys-1490, Cys-1484/Cys-1500, and Cys-1502/Cys-1513. Residues 1435-1471 (ELDLCYSNPCRNGGACARREGGYTCVCRPRFTGEDCE) form the EGF-like 2; calcium-binding domain. The EGF-like 3; calcium-binding domain maps to 1475–1514 (EAGRCVPGVCRNGGTCTDAPNGGFRCQCPAGGAFEGPRCE). Residues 1515–1719 (VAARSFPPSS…VANNGTMAGC (205 aa)) form the Laminin G-like 1 domain. N-linked (GlcNAc...) asparagine glycans are attached at residues Asn-1649 and Asn-1713. 4 disulfides stabilise this stretch: Cys-1693–Cys-1719, Cys-1726–Cys-1737, Cys-1731–Cys-1746, and Cys-1748–Cys-1757. Positions 1722 to 1758 (KLHFCDSGPCKNSGFCSERWGSFSCDCPVGFGGKDCQ) constitute an EGF-like 4; calcium-binding domain. In terms of domain architecture, Laminin G-like 2 spans 1764–1944 (PHHFRGNGTL…SHRVNAEPGC (181 aa)). N-linked (GlcNAc...) asparagine glycosylation is present at Asn-1770. Intrachain disulfides connect Cys-1915/Cys-1944, Cys-1950/Cys-1961, Cys-1955/Cys-1970, Cys-1972/Cys-1981, Cys-1985/Cys-1996, Cys-1990/Cys-2008, Cys-2010/Cys-2019, Cys-2027/Cys-2040, and Cys-2042/Cys-2052. The 37-residue stretch at 1946–1982 (VTNACASGPCPPHADCRDLWQTFSCTCQPGYYGPGCV) folds into the EGF-like 5; calcium-binding domain. Asp-1963 carries the post-translational modification (3R)-3-hydroxyaspartate. Residues 1983–2020 (DACLLNPCQNQGSCRHLPGAPHGYTCDCVGGYFGHHCE) form the EGF-like 6; calcium-binding domain. Positions 2021–2053 (HRMDQQCPRGWWGSPTCGPCNCDVHKGFDPNCN) constitute an EGF-like 7; calcium-binding domain. Asn-2053 carries an N-linked (GlcNAc...) asparagine glycan. The EGF-like 8; calcium-binding domain maps to 2055–2090 (TNGQCHCKEFHYRPRGSDSCLPCDCYPVGSTSRSCA). Disulfide bonds link Cys-2059–Cys-2074, Cys-2061–Cys-2077, Cys-2079–Cys-2089, Cys-2098–Cys-2107, and Cys-2110–Cys-2122. The Laminin EGF-like domain occupies 2077 to 2124 (CDCYPVGSTSRSCAPHSGQCPCRPGALGRQCNSCDSPFAEVTASGCRV). Residue Tyr-2126 is modified to Phosphotyrosine. Asn-2177, Asn-2196, Asn-2386, Asn-2474, and Asn-2506 each carry an N-linked (GlcNAc...) asparagine glycan. Residues 2361-2399 (THVLLPSQSPRPSPSEVLPTSSSIENSTTSSVVPPPAPP) form a disordered region. One can recognise a GAIN-B domain in the interval 2368 to 2530 (QSPRPSPSEV…GVLMDASPRE (163 aa)). Positions 2380 to 2391 (TSSSIENSTTSS) are enriched in low complexity. Intrachain disulfides connect Cys-2480–Cys-2512 and Cys-2500–Cys-2514. The segment at 2480–2530 (CVQWDPPGLAEQHGVWTARDCELVHRNGSHARCRCSRTGTFGVLMDASPRE) is GPS. Residues 2541–2561 (VFTHVVVAVSVAALVLTAAIL) traverse the membrane as a helical segment. The Cytoplasmic portion of the chain corresponds to 2562–2572 (LSLRSLKSNVR). The helical transmembrane segment at 2573–2593 (GIHANVAAALGVAELLFLLGI) threads the bilayer. At 2594–2601 (HRTHNQLV) the chain is on the extracellular side. The chain crosses the membrane as a helical span at residues 2602 to 2622 (CTAVAILLHYFFLSTFAWLFV). The Cytoplasmic portion of the chain corresponds to 2623 to 2643 (QGLHLYRMQVEPRNVDRGAMR). Residues 2644-2664 (FYHALGWGVPAVLLGLAVGLD) form a helical membrane-spanning segment. The Extracellular portion of the chain corresponds to 2665–2681 (PEGYGNPDFCWISVHEP). The chain crosses the membrane as a helical span at residues 2682-2702 (LIWSFAGPVVLVIVMNGTMFL). The Cytoplasmic portion of the chain corresponds to 2703-2725 (LAARTSCSTGQREAKKTSALTLR). Residues 2726 to 2746 (SSFLLLLLVSASWLFGLLAVN) traverse the membrane as a helical segment. At 2747–2753 (HSILAFH) the chain is on the extracellular side. Residues 2754–2774 (YLHAGLCGLQGLAVLLLFCVL) traverse the membrane as a helical segment. Topologically, residues 2775–3312 (NADARAAWMP…SEVPRSEGHS (538 aa)) are cytoplasmic. Disordered stretches follow at residues 2888 to 2927 (AGAD…QRPL) and 2978 to 3006 (TSKD…AQRQ). Residues 2890-2900 (ADSDSDSDLSL) are compositionally biased toward acidic residues. Tyr-3051 carries the post-translational modification Phosphotyrosine. 2 disordered regions span residues 3086–3243 (EEAP…TEQL) and 3256–3312 (SALS…EGHS). Phosphoserine is present on Ser-3097. 3 stretches are compositionally biased toward low complexity: residues 3175-3198 (SPQR…SRSS), 3256-3265 (SALSSVQSSS), and 3272-3281 (TTATPSATAS). Polar residues predominate over residues 3287–3300 (TPRSATSHSISELS).

This sequence belongs to the G-protein coupled receptor 2 family. LN-TM7 subfamily.

The protein resides in the cell membrane. Functionally, receptor that may have an important role in cell/cell signaling during nervous system formation. The polypeptide is Cadherin EGF LAG seven-pass G-type receptor 3 (CELSR3) (Homo sapiens (Human)).